A 452-amino-acid polypeptide reads, in one-letter code: Protein MLF3 (452 aa).

Phosphoserine is present on residues Ser8, Ser11, Ser14, Ser56, Ser74, and Ser79. The disordered stretch occupies residues 61-94 (SGSEVRTPSLRKNSNNVSSPLDNVIPTSRSASNS). Over residues 64–81 (EVRTPSLRKNSNNVSSPL) the composition is skewed to polar residues. Thr121 carries the phosphothreonine modification. Phosphoserine occurs at positions 145, 156, and 160. Thr169 carries the post-translational modification Phosphothreonine. Ser171 carries the post-translational modification Phosphoserine. Polar residues predominate over residues 171–182 (SATLPSSESSPA). The disordered stretch occupies residues 171 to 220 (SATLPSSESSPASPDLKLSRSHSHSAATRPTLNNINNTGMTTTTSNGEPN). At Thr173 the chain carries Phosphothreonine. Phosphoserine occurs at positions 183 and 189. The segment covering 201-216 (TLNNINNTGMTTTTSN) has biased composition (low complexity). Position 227 is a phosphotyrosine (Tyr227). Phosphoserine occurs at positions 228, 257, and 265. 2 disordered regions span residues 290-321 (PATSPYVSPQQSARQYSNNANNNAKSPKNRSS) and 348-402 (IESS…AIGK). Tyr295 is subject to Phosphotyrosine. 3 positions are modified to phosphoserine: Ser297, Ser320, and Ser353. Low complexity predominate over residues 299 to 321 (QQSARQYSNNANNNAKSPKNRSS). The span at 365–383 (PSFPLSSSLRSSANLASNP) shows a compositional bias: low complexity. The span at 384 to 398 (ELATQTPLSTSSSYT) shows a compositional bias: polar residues. At Ser439 the chain carries Phosphoserine.

This sequence to yeast VHS2.

Its subcellular location is the cytoplasm. The polypeptide is Protein MLF3 (MLF3) (Saccharomyces cerevisiae (strain ATCC 204508 / S288c) (Baker's yeast)).